Here is a 191-residue protein sequence, read N- to C-terminus: RRP15-like protein (191 aa).

Residues methionine 1–valine 11 show a composition bias toward basic and acidic residues. Residues methionine 1–proline 52 form a disordered region. Positions alanine 53–alanine 84 form a coiled coil. Residues glutamine 119–alanine 153 show a composition bias toward basic and acidic residues. Residues glutamine 119–aspartate 191 are disordered. Positions glycine 166–aspartate 191 are enriched in acidic residues.

It belongs to the RRP15 family.

This is RRP15-like protein from Caenorhabditis elegans.